The following is a 107-amino-acid chain: Integration host factor (107 aa).

The interval 1-20 is disordered; the sequence is MALPPLTPEQRAAALEKAAA. A compositionally biased stretch (low complexity) spans 9–18; that stretch reads EQRAAALEKA. Lys54 contacts DNA. The short motif at 64–71 is the H2TH motif, binds DNA element; that stretch reads LPGVGKVR. DNA is bound by residues Ser82, Arg85, Arg88, Ser92, Asn93, and Gln94. The tract at residues 82 to 94 is lid, binds DNA; that stretch reads SESRRVRGLGSNQ.

This sequence belongs to the actinobacterial IHF (aIHF) family. In terms of assembly, monomer.

Its subcellular location is the cytoplasm. The protein resides in the spore. It localises to the nucleoid. A nucleoid-associated protein (NAP) that probably plays a role in chromosome compactation. Contributes to development and secondary metabolism, but is dispensable for growth and viability. Binds to the promoter region of a number of genes (including itself); multiple molecules of the protein bind to the DNA simultaneously, deletion alters the expression of about 30 genes (both up- and down-regulation occurs). Plays a role in controlling viability. Binds dsDNA without any obvious sequence specificity, in a concentration and length-dependent manner. Promotes supercoiling in a topoisomerase-dependent manner (counteracts TopA plasmid relaxation). Binds DNA as a monomer, contacting 8 base pairs via the phosphate backbone; each monomer can bind 2 DNA duplexes, allowing a bridging function. Alters DNA topology, constraining negative supercoils, possibly by DNA twist. Longer dsDNA binds more than one sIHF subunit. The protein is Integration host factor of Streptomyces coelicolor (strain ATCC BAA-471 / A3(2) / M145).